The sequence spans 311 residues: Ribose-phosphate pyrophosphokinase (311 aa).

ATP-binding positions include 34–36 (DQE) and 93–94 (RQ). 2 residues coordinate Mg(2+): histidine 127 and aspartate 168. Lysine 191 is a catalytic residue. D-ribose 5-phosphate is bound by residues arginine 193, aspartate 217, and 221–225 (DSGGT).

Belongs to the ribose-phosphate pyrophosphokinase family. Class I subfamily. Homohexamer. Requires Mg(2+) as cofactor.

The protein resides in the cytoplasm. The enzyme catalyses D-ribose 5-phosphate + ATP = 5-phospho-alpha-D-ribose 1-diphosphate + AMP + H(+). It participates in metabolic intermediate biosynthesis; 5-phospho-alpha-D-ribose 1-diphosphate biosynthesis; 5-phospho-alpha-D-ribose 1-diphosphate from D-ribose 5-phosphate (route I): step 1/1. Involved in the biosynthesis of the central metabolite phospho-alpha-D-ribosyl-1-pyrophosphate (PRPP) via the transfer of pyrophosphoryl group from ATP to 1-hydroxyl of ribose-5-phosphate (Rib-5-P). The chain is Ribose-phosphate pyrophosphokinase from Mesorhizobium japonicum (strain LMG 29417 / CECT 9101 / MAFF 303099) (Mesorhizobium loti (strain MAFF 303099)).